Reading from the N-terminus, the 154-residue chain is Protein Smg homolog (154 aa).

This sequence belongs to the Smg family.

This is Protein Smg homolog from Aromatoleum aromaticum (strain DSM 19018 / LMG 30748 / EbN1) (Azoarcus sp. (strain EbN1)).